The following is a 226-amino-acid chain: Exopolysaccharide production protein ExoY (226 aa).

A helical transmembrane segment spans residues 34 to 54; it reads VLAASVALLLFSPLFLLIMAL.

Belongs to the bacterial sugar transferase family.

It localises to the cell membrane. It functions in the pathway glycan metabolism; exopolysaccharide biosynthesis. Functionally, needed for the addition of the first sugar (galactose) to the isoprenoid carrier. May function as a sugar transferase. The protein is Exopolysaccharide production protein ExoY (exoY) of Rhizobium meliloti (strain 1021) (Ensifer meliloti).